We begin with the raw amino-acid sequence, 634 residues long: MKMKLIQPFIQSIRFRIVGLLLLCLIPPTLGGIFLIDSYTGRQLKKIAEQDLQSRARLIIQLISRSDRERQQSTAFVASQPAIVEFNVEASQYFLNEFIKFHQWNGFFVVANQEGELVAGSDGANQEKGLPLKHWFEEVKDKNRHLNRLFPGKTYAESKDCLIVPIHSKNDQTQIGIVVECIPLPVIADFVQKILKDAELERILLVNYEGYIYADTDFKNYGVLENKKKSPLVNRLLNDQSGFVYSQGKFSYLSPVHLRGAKTWGLIVENSESDIQAAILNVNRIGYLLVLVIGGIVAYASWMVIHHSTVPILDLTKASQAIAAGDLDYEININQGNRQDEIGILGNSFIYMKNQIKTLIAQEVKDGVNRLELEKGRQIQQNFLPISLPDLQQWQINAVFEPARSVSGDFYDAFLLGDDYLAIVIGDVCDKGVGAAMFMGLFRSLLRVFSGETMPGDTCIRDVNYKCSANDGNGKKKVIVQFLNAVRLTNDYIATEHGDMAMFATLFFGVIDISNGNLSYINAGHEPVFILNSEGIKHRLKSTGPAVGMMPNSTFTIDSLKIDPGEMLIGYTDGVTDARSPTKEFFGRQRLMETLTANFSAKTEILDIIKQELIGHIDGSIQFDDITMIAVYRN.

Positions 306-361 (HHSTVPILDLTKASQAIAAGDLDYEININQGNRQDEIGILGNSFIYMKNQIKTLIA) constitute an HAMP domain. The PPM-type phosphatase domain occupies 385-633 (PISLPDLQQW…DDITMIAVYR (249 aa)).

In terms of biological role, involved in cross-regulation of inorganic carbon and glucose metabolisms. The sequence is that of Protein IcfG (icfG) from Synechocystis sp. (strain ATCC 27184 / PCC 6803 / Kazusa).